The sequence spans 855 residues: Nuclear valosin-containing protein-like (855 aa).

The interval 1 to 219 (MKPRPGVFVD…SLLESDKKRK (219 aa)) is interaction with RPL5. Residues 49-52 (RRKR) carry the Nucleolar localization signal motif. Lysine 70 bears the N6-acetyllysine mark. The interval 83–234 (LAKRARQDEE…KGNKRKTENL (152 aa)) is disordered. The Nuclear localization signal signature appears at 85–88 (KRAR). Residues 90–110 (DEEDEYTESYSDDDSNMEDYP) show a composition bias toward acidic residues. Polar residues-rich tracts occupy residues 113-123 (QSANPMNSSLL) and 131-157 (SESVSTTPKWGQREATTSTPLLTSKTG). Phosphoserine is present on serine 133. A Phosphothreonine modification is found at threonine 137. The residue at position 155 (lysine 155) is an N6-acetyllysine. A Phosphoserine modification is found at serine 190. A Glycyl lysine isopeptide (Lys-Gly) (interchain with G-Cter in SUMO2) cross-link involves residue lysine 207. Residues serine 210 and serine 214 each carry the phosphoserine modification. Residues 217 to 228 (KRKGRAKGKGNK) are compositionally biased toward basic residues. Residues 217-231 (KRKGRAKGKGNKRKT) carry the Nuclear localization signal motif. Residues 266-473 (VGGNDATLKE…LTPGFVGADL (208 aa)) are interaction with WDR74. Position 304–311 (304–311 (GPPGCGKT)) interacts with ATP. Residues 496 to 523 (QKKKPEIEGLPSEGDQEERLGAEPTSET) are disordered. 621–628 (GPPGCGKT) serves as a coordination point for ATP.

It belongs to the AAA ATPase family. In terms of assembly, interacts with NCL/nucleolin. Isoform 1 and isoform 2 interact with TERT and isoform 1 exhibits a higher binding affinity for TERT compared to isoform 2. Isoform 1 interacts with MTREX in an ATP-dependent manner; the interaction is required to associate NVL with nuclear RNA exosome. Isoform 1 interacts with RPL5 in an ATP-dependent manner. Interacts with WDR74 (through WDR repeats); the interaction is independent of RNA or pre-60S ribosome particles.

The protein resides in the nucleus. The protein localises to the nucleolus. It is found in the nucleoplasm. Its function is as follows. Participates in the assembly of the telomerase holoenzyme and effecting of telomerase activity via its interaction with TERT. Involved in both early and late stages of the pre-rRNA processing pathways. Spatiotemporally regulates 60S ribosomal subunit biogenesis in the nucleolus. Catalyzes the release of specific assembly factors, such as WDR74, from pre-60S ribosomal particles through the ATPase activity. The protein is Nuclear valosin-containing protein-like of Mus musculus (Mouse).